Consider the following 291-residue polypeptide: Ribose-phosphate pyrophosphokinase (291 aa).

Residues 34-36 (DGE) and 93-94 (RQ) contribute to the ATP site. Mg(2+)-binding residues include His127 and Asp165. Lys188 is a catalytic residue. Residues Arg190, Asp216, and 220-224 (STGGT) contribute to the D-ribose 5-phosphate site.

It belongs to the ribose-phosphate pyrophosphokinase family. Class III (archaeal) subfamily. Homodimer. Mg(2+) is required as a cofactor.

It localises to the cytoplasm. The enzyme catalyses D-ribose 5-phosphate + ATP = 5-phospho-alpha-D-ribose 1-diphosphate + AMP + H(+). Its pathway is metabolic intermediate biosynthesis; 5-phospho-alpha-D-ribose 1-diphosphate biosynthesis; 5-phospho-alpha-D-ribose 1-diphosphate from D-ribose 5-phosphate (route I): step 1/1. Involved in the biosynthesis of the central metabolite phospho-alpha-D-ribosyl-1-pyrophosphate (PRPP) via the transfer of pyrophosphoryl group from ATP to 1-hydroxyl of ribose-5-phosphate (Rib-5-P). The chain is Ribose-phosphate pyrophosphokinase from Saccharolobus solfataricus (strain ATCC 35092 / DSM 1617 / JCM 11322 / P2) (Sulfolobus solfataricus).